The sequence spans 196 residues: Pyridoxal 5'-phosphate synthase subunit PdxT (196 aa).

47–49 (GES) serves as a coordination point for L-glutamine. The Nucleophile role is filled by cysteine 79. Residues arginine 106 and 134–135 (IR) contribute to the L-glutamine site. Active-site charge relay system residues include histidine 170 and glutamate 172.

This sequence belongs to the glutaminase PdxT/SNO family. In terms of assembly, in the presence of PdxS, forms a dodecamer of heterodimers. Only shows activity in the heterodimer.

It catalyses the reaction aldehydo-D-ribose 5-phosphate + D-glyceraldehyde 3-phosphate + L-glutamine = pyridoxal 5'-phosphate + L-glutamate + phosphate + 3 H2O + H(+). It carries out the reaction L-glutamine + H2O = L-glutamate + NH4(+). It participates in cofactor biosynthesis; pyridoxal 5'-phosphate biosynthesis. Catalyzes the hydrolysis of glutamine to glutamate and ammonia as part of the biosynthesis of pyridoxal 5'-phosphate. The resulting ammonia molecule is channeled to the active site of PdxS. The chain is Pyridoxal 5'-phosphate synthase subunit PdxT from Halalkalibacterium halodurans (strain ATCC BAA-125 / DSM 18197 / FERM 7344 / JCM 9153 / C-125) (Bacillus halodurans).